The primary structure comprises 1249 residues: Myosin-1 (1249 aa).

The segment at 1 to 42 is disordered; sequence MGHSRRPAGGEKKSRGFGRSKAVADVGDGRQTGGKPQVKKAT. Positions 51–730 constitute a Myosin motor domain; it reads IGVSDLTLLS…TLFALEAMRD (680 aa). An ATP-binding site is contributed by 144 to 151; sequence GESGAGKT. Serine 372 bears the Phosphoserine mark. Positions 419–501 are actin-binding; sequence SIGILDIYGF…PGVFAALNDA (83 aa). 2 IQ domains span residues 734–754 and 755–780; these read HNMA…RTEC and AIRI…QGHQ. The region spanning 788-978 is the TH1 domain; it reads RRRMSLLGSR…TIHTGPGEPA (191 aa). 2 disordered regions span residues 962 to 1079 and 1126 to 1249; these read DDSY…PKKP and WTPE…DDDW. The span at 1021–1035 shows a compositional bias: pro residues; it reads AAQPLPRATPQPAEP. The segment covering 1036 to 1051 has biased composition (low complexity); it reads QPAARAVPQPVAAVAA. Pro residues-rich tracts occupy residues 1064–1077 and 1139–1150; these read APPP…PAPK and TPKPAPPPPPAA. The SH3 domain occupies 1076 to 1137; sequence PKKPTAKVLY…PEAYLEEQVA (62 aa). Positions 1151 to 1169 are enriched in low complexity; that stretch reads PRSTPAPATNGAAAAAKAK. Polar residues predominate over residues 1200–1221; it reads VSMNSHDSSGGSGRGTPNSMSN. The segment covering 1222–1231 has biased composition (low complexity); that stretch reads ASLAGGLAEA.

The protein belongs to the TRAFAC class myosin-kinesin ATPase superfamily. Myosin family. In terms of processing, phosphorylation of the TEDS site (Ser-372) is required for the polarization of the actin cytoskeleton. Phosphorylation probably activates the myosin-I ATPase activity.

It is found in the cytoplasm. Its subcellular location is the cytoskeleton. The protein localises to the actin patch. Type-I myosin implicated in the organization of the actin cytoskeleton. Required for proper actin cytoskeleton polarization. At the cell cortex, assembles in patch-like structures together with proteins from the actin-polymerizing machinery and promotes actin assembly. Functions as actin nucleation-promoting factor (NPF) for the Arp2/3 complex. Plays an important role in polarized growth, spore germination, hyphal morphogenesis, and septal wall formation. In Aspergillus fumigatus (strain ATCC MYA-4609 / CBS 101355 / FGSC A1100 / Af293) (Neosartorya fumigata), this protein is Myosin-1 (myoA).